The following is a 357-amino-acid chain: Glutamine synthetase cytosolic isozyme (357 aa).

The GS beta-grasp domain maps to 20–100 (VIAEYIWIGG…VICDAYSPNG (81 aa)). A GS catalytic domain is found at 107–357 (KRAAAAKIFN…IAETTILWKP (251 aa)).

Belongs to the glutamine synthetase family. In terms of assembly, homooctamer.

It localises to the cytoplasm. It carries out the reaction L-glutamate + NH4(+) + ATP = L-glutamine + ADP + phosphate + H(+). This chain is Glutamine synthetase cytosolic isozyme, found in Pinus sylvestris (Scotch pine).